The sequence spans 369 residues: Variable large protein 7 (369 aa).

The signal sequence occupies residues 1-26 (MRKRISAIINKLNISIIIMTVVLMIG). C27 is lipidated: N-palmitoyl cysteine. The S-diacylglycerol cysteine moiety is linked to residue C27.

Belongs to the variable large protein (Vlp) family. Alpha subfamily.

It is found in the cell outer membrane. Functionally, the Vlp and Vsp proteins are antigenically distinct proteins, only one vlp or vsp gene is transcriptionally active at any one time. Switching between these genes is a mechanism of host immune response evasion. The chain is Variable large protein 7 from Borrelia hermsii.